Reading from the N-terminus, the 233-residue chain is ATP-dependent dethiobiotin synthetase BioD (233 aa).

Residue 12-17 (GVGKTI) participates in ATP binding. Residue Thr-16 participates in Mg(2+) binding. Lys-37 is a catalytic residue. Ser-41 serves as a coordination point for substrate. ATP-binding positions include Asp-51, 112 to 115 (EGAG), and 202 to 204 (PKL). Asp-51 and Glu-112 together coordinate Mg(2+).

It belongs to the dethiobiotin synthetase family. Homodimer. Mg(2+) serves as cofactor.

It is found in the cytoplasm. The enzyme catalyses (7R,8S)-7,8-diammoniononanoate + CO2 + ATP = (4R,5S)-dethiobiotin + ADP + phosphate + 3 H(+). The protein operates within cofactor biosynthesis; biotin biosynthesis; biotin from 7,8-diaminononanoate: step 1/2. Functionally, catalyzes a mechanistically unusual reaction, the ATP-dependent insertion of CO2 between the N7 and N8 nitrogen atoms of 7,8-diaminopelargonic acid (DAPA, also called 7,8-diammoniononanoate) to form a ureido ring. This Bacillus velezensis (strain DSM 23117 / BGSC 10A6 / LMG 26770 / FZB42) (Bacillus amyloliquefaciens subsp. plantarum) protein is ATP-dependent dethiobiotin synthetase BioD.